The chain runs to 167 residues: MSKKPAKDKAKSATATKTIALNKRARHEYHLEERYEAGLALQGWEVKAIRAGRANIVDGYAYVRSGEIYLIGAQITPLIQASTHVIPVERRDRKLLLHRAEIDKVLTRVEREGYTLVPTALYWSSNKVKLEIALAKGKQSHDKRDAAKERDWQRDKQRVMRRHNRDA.

Residues glycine 137 to alanine 167 are disordered. Positions glutamine 139–arginine 158 are enriched in basic and acidic residues.

The protein belongs to the SmpB family.

The protein localises to the cytoplasm. Functionally, required for rescue of stalled ribosomes mediated by trans-translation. Binds to transfer-messenger RNA (tmRNA), required for stable association of tmRNA with ribosomes. tmRNA and SmpB together mimic tRNA shape, replacing the anticodon stem-loop with SmpB. tmRNA is encoded by the ssrA gene; the 2 termini fold to resemble tRNA(Ala) and it encodes a 'tag peptide', a short internal open reading frame. During trans-translation Ala-aminoacylated tmRNA acts like a tRNA, entering the A-site of stalled ribosomes, displacing the stalled mRNA. The ribosome then switches to translate the ORF on the tmRNA; the nascent peptide is terminated with the 'tag peptide' encoded by the tmRNA and targeted for degradation. The ribosome is freed to recommence translation, which seems to be the essential function of trans-translation. This Xanthomonas campestris pv. campestris (strain 8004) protein is SsrA-binding protein.